The chain runs to 121 residues: Thioredoxin-like protein (121 aa).

In terms of domain architecture, Thioredoxin spans Val2 to Gly112. A disulfide bridge connects residues Cys30 and Cys33.

The protein belongs to the thioredoxin family.

In terms of biological role, participates in various redox reactions through the reversible oxidation of its active center dithiol to a disulfide and catalyzes dithiol-disulfide exchange reactions. The protein is Thioredoxin-like protein of Fusarium culmorum.